Reading from the N-terminus, the 597-residue chain is ATP-dependent lipid A-core flippase (597 aa).

A run of 6 helical transmembrane segments spans residues 26-46 (LWPYIKPLIWVLIGAIVAMAV), 76-96 (WFVPAAVIGLALIRSLSQYAS), 138-158 (AIVFEVNQILNVLLSVLVTLV), 164-184 (VVFLLGYLFYLNWRLTLIVAV), 263-283 (QPLTQFLASIALAVVITIAVV), and 292-312 (VGGFVAFVTSMLLIISPLKHL). An ABC transmembrane type-1 domain is found at 38-321 (IGAIVAMAVS…LMDVNQPLQR (284 aa)). One can recognise an ABC transporter domain in the interval 353–590 (VEFRDVSFVY…DGLYAHLHRI (238 aa)). 390–397 (GPSGSGKT) provides a ligand contact to ATP.

It belongs to the ABC transporter superfamily. Lipid exporter (TC 3.A.1.106) family. As to quaternary structure, homodimer.

It localises to the cell inner membrane. It catalyses the reaction ATP + H2O + lipid A-core oligosaccharideSide 1 = ADP + phosphate + lipid A-core oligosaccharideSide 2.. Involved in lipopolysaccharide (LPS) biosynthesis. Translocates lipid A-core from the inner to the outer leaflet of the inner membrane. Transmembrane domains (TMD) form a pore in the inner membrane and the ATP-binding domain (NBD) is responsible for energy generation. The protein is ATP-dependent lipid A-core flippase of Paraburkholderia xenovorans (strain LB400).